A 519-amino-acid chain; its full sequence is MDAVLEPFPADRLFPGSSFLDLGDLNESDFLNNAHFPEHLDHFTENMEDFSNDLFSSFFDDPVLDEKSPLLDMELDSPTPGIQAEHSYSLSGDSAPQSPLVPIKMEDTTQDAEHGAWALGHKLCSIMVKQEQSPELPVDPLAAPSAMAAAAAMATTPLLGLSPLSRLPIPHQAPGEMTQLPVIKAEPLEVNQFLKVTPEDLVQMPPTPPSSHGSDSDGSQSPRSLPPSSPVRPMARSSTAISTSPLLTAPHKLQGTSGPLLLTEEEKRTLIAEGYPIPTKLPLTKAEEKALKRVRRKIKNKISAQESRRKKKEYVECLEKKVETFTSENNELWKKVETLENANRTLLQQLQKLQTLVTNKISRPYKMAATQTGTCLMVAALCFVLVLGSLVPCLPEFSSGSQTVKEDPLAADGVYTASQMPSRSLLFYDDGAGLWEDGRSTLLPMEPPDGWEINPGGPAEQRPRDHLQHDHLDSTHETTKYLSEAWPKDGGNGTSPDFSHSKEWFHDRDLGPNTTIKLS.

Positions 1–60 (MDAVLEPFPADRLFPGSSFLDLGDLNESDFLNNAHFPEHLDHFTENMEDFSNDLFSSFFD) are required for transcriptional activation. Topologically, residues 1–374 (MDAVLEPFPA…YKMAATQTGT (374 aa)) are cytoplasmic. Positions 71–98 (LDMELDSPTPGIQAEHSYSLSGDSAPQS) are disordered. The span at 86 to 97 (HSYSLSGDSAPQ) shows a compositional bias: polar residues. A Glycyl lysine isopeptide (Lys-Gly) (interchain with G-Cter in SUMO2) cross-link involves residue K184. A disordered region spans residues 200-259 (DLVQMPPTPPSSHGSDSDGSQSPRSLPPSSPVRPMARSSTAISTSPLLTAPHKLQGTSGP). Residues 210–223 (SSHGSDSDGSQSPR) show a composition bias toward low complexity. A compositionally biased stretch (polar residues) spans 236 to 246 (RSSTAISTSPL). The bZIP domain maps to 290-353 (ALKRVRRKIK…RTLLQQLQKL (64 aa)). The interval 292 to 321 (KRVRRKIKNKISAQESRRKKKEYVECLEKK) is basic motif. The leucine-zipper stretch occupies residues 332-353 (LWKKVETLENANRTLLQQLQKL). The helical; Signal-anchor for type II membrane protein transmembrane segment at 375 to 395 (CLMVAALCFVLVLGSLVPCLP) threads the bilayer. The MBTPS2 recognition motif lies at 392 to 395 (PCLP). The Lumenal portion of the chain corresponds to 396 to 519 (EFSSGSQTVK…LGPNTTIKLS (124 aa)). Residues 423–426 (RSLL) carry the MBTPS1 recognition motif. A disordered region spans residues 484 to 519 (EAWPKDGGNGTSPDFSHSKEWFHDRDLGPNTTIKLS). A glycan (N-linked (GlcNAc...) asparagine) is linked at N492. The segment covering 499–510 (SHSKEWFHDRDL) has biased composition (basic and acidic residues). N513 is a glycosylation site (N-linked (GlcNAc...) asparagine).

It belongs to the bZIP family. ATF subfamily. Interacts with SMAD4, the interaction takes place upon TGFB1 induction and SMAD4 acts as a CREB3L1 coactivator to induce the expression of genes involved in assembly of collagen extracellular matrix. In terms of processing, upon ER stress or DNA damage, translocated to the Golgi apparatus, where it is processed by regulated intramembrane proteolysis (RIP) to release the cytosol-facing N-terminal transcription factor domain. The cleavage is performed sequentially by site-1 and site-2 proteases (S1P/MBTPS1 and S2P/MBTPS2). RIP is induced by TGFB1 and ceramide. Post-translationally, N-glycosylated. Ubiquitinated by HRD1/SYVN1; undergoes 'Lys-48'-linked ubiquitination, followed by rapid proteasomal degradation under normal conditions. Upon ER stress, SYVN1 E3 ubiquitin-protein ligase dissociates from its substrate, ubiquitination does not occur and CREB3L1 is stabilized. In terms of tissue distribution, expressed in several tissues, with highest levels in pancreas and prostate. Expressed at relatively lower levels in brain.

The protein localises to the endoplasmic reticulum membrane. The protein resides in the nucleus. Precursor of the transcription factor form (Processed cyclic AMP-responsive element-binding protein 3-like protein 1), which is embedded in the endoplasmic reticulum membrane with N-terminal DNA-binding and transcription activation domains oriented toward the cytosolic face of the membrane. In response to ER stress or DNA damage, transported to the Golgi, where it is cleaved in a site-specific manner by resident proteases S1P/MBTPS1 and S2P/MBTPS2. The released N-terminal cytosolic domain is translocated to the nucleus where it activates transcription of specific target genes involved in the cell-cycle progression inhibition. In terms of biological role, transcription factor involved in cell type specific DNA damage and unfolded protein response (UPR). Binds the DNA consensus sequence 5'-GTGXGCXGC-3'. Plays a critical role in bone formation through the transcription of COL1A1, and possibly COL1A2, and the secretion of bone matrix proteins. Directly binds to the UPR element (UPRE)-like sequence in an osteoblast-specific COL1A1 promoter region and induces its transcription. Does not regulate COL1A1 in other tissues, such as skin. Required to protect astrocytes from ER stress-induced cell death. In astrocytes, binds to the cAMP response element (CRE) of the BiP/HSPA5 promoter and participate in its transcriptional activation. In astrocytes and osteoblasts, upon DNA damage, inhibits cell-cycle progression after G2/M phase by binding to promoters and activating transcription of genes encoding cell-cycle inhibitors, such as p21/CDKN1A. Required for TGFB1 to activate genes involved in the assembly of collagen extracellular matrix. Functionally, (Microbial infection) May play a role in limiting virus spread by inhibiting proliferation of virus-infected cells. Upon infection with diverse DNA and RNA viruses, inhibits cell-cycle progression by binding to promoters and activating transcription of genes encoding cell-cycle inhibitors, such as p21/CDKN1A. In Homo sapiens (Human), this protein is Cyclic AMP-responsive element-binding protein 3-like protein 1.